We begin with the raw amino-acid sequence, 332 residues long: Anthranilate phosphoribosyltransferase (332 aa).

5-phospho-alpha-D-ribose 1-diphosphate is bound by residues Gly-79, 82 to 83 (GD), Thr-87, 89 to 92 (NIST), 107 to 115 (KHGNRSVSS), and Ser-119. Gly-79 provides a ligand contact to anthranilate. Position 91 (Ser-91) interacts with Mg(2+). Asn-110 is an anthranilate binding site. Anthranilate is bound at residue Arg-165. Mg(2+) is bound by residues Asp-223 and Glu-224.

Belongs to the anthranilate phosphoribosyltransferase family. In terms of assembly, homodimer. Mg(2+) is required as a cofactor.

The catalysed reaction is N-(5-phospho-beta-D-ribosyl)anthranilate + diphosphate = 5-phospho-alpha-D-ribose 1-diphosphate + anthranilate. It functions in the pathway amino-acid biosynthesis; L-tryptophan biosynthesis; L-tryptophan from chorismate: step 2/5. Its function is as follows. Catalyzes the transfer of the phosphoribosyl group of 5-phosphorylribose-1-pyrophosphate (PRPP) to anthranilate to yield N-(5'-phosphoribosyl)-anthranilate (PRA). The sequence is that of Anthranilate phosphoribosyltransferase from Vibrio parahaemolyticus serotype O3:K6 (strain RIMD 2210633).